A 222-amino-acid polypeptide reads, in one-letter code: L-serine dehydratase, beta chain (222 aa).

The region spanning 150-222 is the ACT domain; it reads TILLEYPEQR…RFTTAKYVEV (73 aa).

Belongs to the iron-sulfur dependent L-serine dehydratase family. Heterooctamer of four alpha chains and four beta chains. [4Fe-4S] cluster is required as a cofactor.

It catalyses the reaction L-serine = pyruvate + NH4(+). The protein operates within carbohydrate biosynthesis; gluconeogenesis. This Peptoniphilus asaccharolyticus (Peptostreptococcus asaccharolyticus) protein is L-serine dehydratase, beta chain (sdhB).